A 258-amino-acid chain; its full sequence is UPF0246 protein YaaA (258 aa).

It belongs to the UPF0246 family.

This Escherichia coli (strain K12 / MC4100 / BW2952) protein is UPF0246 protein YaaA.